Consider the following 214-residue polypeptide: External core antigen (214 aa).

The N-terminal stretch at 1–19 (MQLFHLCLIISCTCPTVQA) is a signal peptide. Residues 25 to 27 (GWL) are HBEAG. Positions 165 to 214 (NAPILSTLPETTVVRRRDRGRSPRRRTPSPRRRRSPSPRRRRSQSRESQC) are disordered. Residues 178–207 (VRRRDRGRSPRRRTPSPRRRRSPSPRRRRS) show a composition bias toward basic residues. Residues 186 to 192 (SPRRRTP) form a 1; half-length repeat. The interval 186–208 (SPRRRTPSPRRRRSPSPRRRRSQ) is 3 X 8 AA repeats of S-P-R-R-R-R-S-[PQ]. A propeptide spanning residues 186–214 (SPRRRTPSPRRRRSPSPRRRRSQSRESQC) is cleaved from the precursor. Repeat copies occupy residues 193 to 200 (SPRRRRSP) and 201 to 208 (SPRRRRSQ).

This sequence belongs to the orthohepadnavirus precore antigen family. Homodimerizes. In terms of processing, phosphorylated. Post-translationally, cleaved by host furin.

It localises to the secreted. The protein localises to the host nucleus. Its function is as follows. May regulate immune response to the intracellular capsid in acting as a T-cell tolerogen, by having an immunoregulatory effect which prevents destruction of infected cells by cytotoxic T-cells. This immune regulation may predispose to chronicity during perinatal infections and prevent severe liver injury during adult infections. The sequence is that of External core antigen from Hepatitis B virus genotype A2 subtype adw2 (strain Rutter 1979) (HBV-A).